We begin with the raw amino-acid sequence, 294 residues long: Indole-3-glycerol phosphate synthase (294 aa).

This sequence belongs to the TrpC family.

It catalyses the reaction 1-(2-carboxyphenylamino)-1-deoxy-D-ribulose 5-phosphate + H(+) = (1S,2R)-1-C-(indol-3-yl)glycerol 3-phosphate + CO2 + H2O. It functions in the pathway amino-acid biosynthesis; L-tryptophan biosynthesis; L-tryptophan from chorismate: step 4/5. The polypeptide is Indole-3-glycerol phosphate synthase (Synechococcus sp. (strain CC9902)).